The following is a 663-amino-acid chain: Protein KINESIN LIGHT CHAIN-RELATED 2 (663 aa).

Positions 1 to 14 are enriched in basic and acidic residues; it reads MDVGESNERVKDDS. Disordered regions lie at residues 1–24 and 86–146; these read MDVG…RSPL and GESK…KVSV. Ser19 bears the Phosphoserine mark. A compositionally biased stretch (basic and acidic residues) spans 86-100; it reads GESKKEIILEKKEES. Polar residues predominate over residues 102 to 111; the sequence is GEGSLSQKKP. TPR repeat units lie at residues 147–181, 200–233, 243–276, 285–318, 329–363, 369–402, 411–444, 454–487, 495–528, 537–570, and 579–612; these read DEES…ALRA, VMSL…PMIE, FAGC…QRQV, GETC…HKEN, AADR…SSQN, AAVD…FKQG, ALVY…YLKP, ATGF…YANA, AGIE…FRNS, GIAL…LEKE, and LAVY…REEK.

This sequence belongs to the kinesin light chain family.

This is Protein KINESIN LIGHT CHAIN-RELATED 2 from Arabidopsis thaliana (Mouse-ear cress).